A 512-amino-acid chain; its full sequence is DNA damage-binding protein CMR1 (512 aa).

A disordered region spans residues 32 to 96 (SQIKREAGVE…IPNVNDNQLL (65 aa)). Basic and acidic residues predominate over residues 34 to 46 (IKREAGVEDEHLD). Basic residues predominate over residues 47–60 (RKRKKKAGSAKKAV). WD repeat units lie at residues 189–230 (LTAE…PEDE), 241–281 (LFTK…SEEI), 289–329 (DDPL…TEIN), 333–373 (LSDK…NKPE), 390–429 (DSRL…PEDL), 442–481 (GRWT…LAHL), and 482–512 (PTAT…FLFT).

The protein belongs to the WD repeat DDB2/WDR76 family.

DNA-binding protein that binds to both single- and double-stranded DNA. Binds preferentially to UV-damaged DNA. May be involved in DNA-metabolic processes. The sequence is that of DNA damage-binding protein CMR1 from Kluyveromyces lactis (strain ATCC 8585 / CBS 2359 / DSM 70799 / NBRC 1267 / NRRL Y-1140 / WM37) (Yeast).